We begin with the raw amino-acid sequence, 92 residues long: Large ribosomal subunit protein uL23c (92 aa).

The protein belongs to the universal ribosomal protein uL23 family. As to quaternary structure, part of the 50S ribosomal subunit.

It localises to the plastid. It is found in the chloroplast. Its function is as follows. Binds to 23S rRNA. In Chara vulgaris (Common stonewort), this protein is Large ribosomal subunit protein uL23c (rpl23).